The following is a 145-amino-acid chain: MKGNYLVIDKRVLPDVYEKVVFAQKLLKDGKVKEITEATKIAGISRSVYYKYKDYIFDFAETSQGKKVTFNLIVKDQTGVLSGVINYISEQGGNILTINQGIPINGVANISVTIDMSTLIGDIKTLLNGLSDIQYVEKIEFVAME.

In terms of domain architecture, ACT spans 69–144 (TFNLIVKDQT…YVEKIEFVAM (76 aa)).

This sequence belongs to the UPF0735 family.

This is UPF0735 ACT domain-containing protein CLH_2637 from Clostridium botulinum (strain Alaska E43 / Type E3).